The primary structure comprises 371 residues: Neuropeptide S receptor (371 aa).

At 1-52 (MPANLTEGSFHANQTVPMLDSSPVACTEIVTFTEALVAEEWGSFYSSFKTEQ) the chain is on the extracellular side. Residues asparagine 4 and asparagine 13 are each glycosylated (N-linked (GlcNAc...) asparagine). Residues 53–73 (LITLWVLFVVTIVGNSVVLFS) traverse the membrane as a helical segment. Topologically, residues 74 to 82 (TCRRKRKSR) are cytoplasmic. The helical transmembrane segment at 83–103 (MTFFVTQLAITDSFTGLINIL) threads the bilayer. At 104–123 (TDIIWRFTGDFMAPDLVCRV) the chain is on the extracellular side. Residues cysteine 121 and cysteine 197 are joined by a disulfide bond. The chain crosses the membrane as a helical span at residues 124–144 (VRYLQVVLLYASTYVLVSLSI). Over 145–164 (DRYHAIVYPMKFLQGEKQAK) the chain is Cytoplasmic. The helical transmembrane segment at 165–185 (VLIGIAWSLSFLFSIPTLIIF) threads the bilayer. At 186-212 (GKRTLSNGEVQCWALWPDDSYWTPYMT) the chain is on the extracellular side. A helical membrane pass occupies residues 213 to 233 (IVAFLVYFIPLAIISVIYGLV). Over 234–275 (IRTIWMKSKTHETVISNCSDGKLCCSYNRGLISKAKIKAIKY) the chain is Cytoplasmic. Residues 276-296 (SIVIILAFICCWSPYFLFDIL) form a helical membrane-spanning segment. Residues 297–312 (DNFNVLPDTKERFYAS) are Extracellular-facing. The chain crosses the membrane as a helical span at residues 313-333 (VIIQNLPALNSAINPLIYCIF). Topologically, residues 334–371 (SSSICSPCKMQRSQDSRMTYRERSERHEMQILSKPEFI) are cytoplasmic.

It belongs to the G-protein coupled receptor 1 family. Vasopressin/oxytocin receptor subfamily.

The protein localises to the cell membrane. Its function is as follows. G-protein coupled receptor for neuropeptide S (NPS). Promotes mobilization of intracellular Ca(2+) stores. Inhibits cell growth in response to NPS binding. Involved in pathogenesis of asthma and other IgE-mediated diseases. This chain is Neuropeptide S receptor (Npsr1), found in Mus musculus (Mouse).